Here is a 287-residue protein sequence, read N- to C-terminus: Phosphatidylserine decarboxylase proenzyme (287 aa).

Catalysis depends on charge relay system; for autoendoproteolytic cleavage activity residues aspartate 90, histidine 147, and serine 252. Serine 252 serves as the catalytic Schiff-base intermediate with substrate; via pyruvic acid; for decarboxylase activity. Serine 252 carries the pyruvic acid (Ser); by autocatalysis modification.

It belongs to the phosphatidylserine decarboxylase family. PSD-B subfamily. Prokaryotic type I sub-subfamily. Heterodimer of a large membrane-associated beta subunit and a small pyruvoyl-containing alpha subunit. It depends on pyruvate as a cofactor. In terms of processing, is synthesized initially as an inactive proenzyme. Formation of the active enzyme involves a self-maturation process in which the active site pyruvoyl group is generated from an internal serine residue via an autocatalytic post-translational modification. Two non-identical subunits are generated from the proenzyme in this reaction, and the pyruvate is formed at the N-terminus of the alpha chain, which is derived from the carboxyl end of the proenzyme. The autoendoproteolytic cleavage occurs by a canonical serine protease mechanism, in which the side chain hydroxyl group of the serine supplies its oxygen atom to form the C-terminus of the beta chain, while the remainder of the serine residue undergoes an oxidative deamination to produce ammonia and the pyruvoyl prosthetic group on the alpha chain. During this reaction, the Ser that is part of the protease active site of the proenzyme becomes the pyruvoyl prosthetic group, which constitutes an essential element of the active site of the mature decarboxylase.

Its subcellular location is the cell membrane. It carries out the reaction a 1,2-diacyl-sn-glycero-3-phospho-L-serine + H(+) = a 1,2-diacyl-sn-glycero-3-phosphoethanolamine + CO2. The protein operates within phospholipid metabolism; phosphatidylethanolamine biosynthesis; phosphatidylethanolamine from CDP-diacylglycerol: step 2/2. Catalyzes the formation of phosphatidylethanolamine (PtdEtn) from phosphatidylserine (PtdSer). The sequence is that of Phosphatidylserine decarboxylase proenzyme from Pseudomonas putida (strain W619).